Here is a 547-residue protein sequence, read N- to C-terminus: GMP synthase [glutamine-hydrolyzing] (547 aa).

The region spanning 12–210 (KILILDFGSQ…VLDIAGAKPD (199 aa)) is the Glutamine amidotransferase type-1 domain. Residue cysteine 89 is the Nucleophile of the active site. Catalysis depends on residues histidine 184 and glutamate 186. The 193-residue stretch at 211–403 (WIMRDHIEEA…LGLPAEMVYR (193 aa)) folds into the GMPS ATP-PPase domain. An ATP-binding site is contributed by 238–244 (SGGVDSS).

As to quaternary structure, homodimer.

The enzyme catalyses XMP + L-glutamine + ATP + H2O = GMP + L-glutamate + AMP + diphosphate + 2 H(+). It participates in purine metabolism; GMP biosynthesis; GMP from XMP (L-Gln route): step 1/1. In terms of biological role, catalyzes the synthesis of GMP from XMP. The protein is GMP synthase [glutamine-hydrolyzing] of Burkholderia pseudomallei (strain 1710b).